An 88-amino-acid polypeptide reads, in one-letter code: Large ribosomal subunit protein bL31B (88 aa).

This sequence belongs to the bacterial ribosomal protein bL31 family. Type B subfamily. Part of the 50S ribosomal subunit.

The protein is Large ribosomal subunit protein bL31B of Paraburkholderia xenovorans (strain LB400).